The primary structure comprises 336 residues: Mitochondrial thiamine pyrophosphate carrier 1 (336 aa).

3 Solcar repeats span residues 11–98 (ISST…VNQV), 112–202 (SSGA…VKDS), and 221–323 (TKGW…SLSI). The next 6 membrane-spanning stretches (helical) occupy residues 17 to 37 (MLCGGIAGMVSRFCIAPLDVV), 66 to 86 (GVTALWKGNIPAELLYVFYGA), 118 to 138 (FIAGATAGAGATIATYPFDLF), 177 to 197 (GVSSSIISIAPYMGLFFASYG), 228 to 244 (TAGLCAGTASKALVFPL), and 298 to 315 (GFLVSLIKSAPTSAITMY).

The protein belongs to the mitochondrial carrier (TC 2.A.29) family.

Its subcellular location is the mitochondrion inner membrane. In terms of biological role, mitochondrial transporter that mediates uptake of thiamine pyrophosphate (ThPP) into mitochondria. The chain is Mitochondrial thiamine pyrophosphate carrier 1 (TPC1) from Yarrowia lipolytica (strain CLIB 122 / E 150) (Yeast).